Reading from the N-terminus, the 354-residue chain is Uroporphyrinogen decarboxylase (354 aa).

Residues 27–31, aspartate 77, tyrosine 154, threonine 209, and histidine 327 contribute to the substrate site; that span reads RQAGR.

It belongs to the uroporphyrinogen decarboxylase family. Homodimer.

The protein localises to the cytoplasm. It catalyses the reaction uroporphyrinogen III + 4 H(+) = coproporphyrinogen III + 4 CO2. Its pathway is porphyrin-containing compound metabolism; protoporphyrin-IX biosynthesis; coproporphyrinogen-III from 5-aminolevulinate: step 4/4. Its function is as follows. Catalyzes the decarboxylation of four acetate groups of uroporphyrinogen-III to yield coproporphyrinogen-III. This is Uroporphyrinogen decarboxylase from Salmonella paratyphi A (strain ATCC 9150 / SARB42).